A 421-amino-acid chain; its full sequence is Peptide chain release factor subunit 1 (421 aa).

This sequence belongs to the eukaryotic release factor 1 family. In terms of assembly, heterodimer of two subunits, one of which binds GTP.

The protein localises to the cytoplasm. Functionally, directs the termination of nascent peptide synthesis (translation) in response to the termination codons UAA, UAG and UGA. In Methanocaldococcus jannaschii (strain ATCC 43067 / DSM 2661 / JAL-1 / JCM 10045 / NBRC 100440) (Methanococcus jannaschii), this protein is Peptide chain release factor subunit 1 (prf1).